The primary structure comprises 224 residues: Orotidine 5'-phosphate decarboxylase (224 aa).

Substrate is bound by residues Asp-10, Lys-32, 59–68, Thr-115, Arg-175, Gln-184, Gly-204, and Arg-205; that span reads DLKLHDIPNT. Lys-61 (proton donor) is an active-site residue.

Belongs to the OMP decarboxylase family. Type 1 subfamily. As to quaternary structure, homodimer.

It carries out the reaction orotidine 5'-phosphate + H(+) = UMP + CO2. It participates in pyrimidine metabolism; UMP biosynthesis via de novo pathway; UMP from orotate: step 2/2. Its function is as follows. Catalyzes the decarboxylation of orotidine 5'-monophosphate (OMP) to uridine 5'-monophosphate (UMP). The chain is Orotidine 5'-phosphate decarboxylase from Sphingopyxis alaskensis (strain DSM 13593 / LMG 18877 / RB2256) (Sphingomonas alaskensis).